We begin with the raw amino-acid sequence, 205 residues long: Holliday junction branch migration complex subunit RuvA (205 aa).

The tract at residues 1–64 (MIGKLKGTID…EDQLKLFGFM (64 aa)) is domain I. Residues 65-143 (SALEREWFNL…AFTGDAGSAI (79 aa)) form a domain II region. The flexible linker stretch occupies residues 144 to 153 (GLKQELGEGV). Positions 153–205 (VASAPVSDAVSALTNLGYSRDQAANAIAAALKNGGEGADSAKLIRLGLKELSR) are domain III.

This sequence belongs to the RuvA family. As to quaternary structure, homotetramer. Forms an RuvA(8)-RuvB(12)-Holliday junction (HJ) complex. HJ DNA is sandwiched between 2 RuvA tetramers; dsDNA enters through RuvA and exits via RuvB. An RuvB hexamer assembles on each DNA strand where it exits the tetramer. Each RuvB hexamer is contacted by two RuvA subunits (via domain III) on 2 adjacent RuvB subunits; this complex drives branch migration. In the full resolvosome a probable DNA-RuvA(4)-RuvB(12)-RuvC(2) complex forms which resolves the HJ.

It localises to the cytoplasm. The RuvA-RuvB-RuvC complex processes Holliday junction (HJ) DNA during genetic recombination and DNA repair, while the RuvA-RuvB complex plays an important role in the rescue of blocked DNA replication forks via replication fork reversal (RFR). RuvA specifically binds to HJ cruciform DNA, conferring on it an open structure. The RuvB hexamer acts as an ATP-dependent pump, pulling dsDNA into and through the RuvAB complex. HJ branch migration allows RuvC to scan DNA until it finds its consensus sequence, where it cleaves and resolves the cruciform DNA. In Allorhizobium ampelinum (strain ATCC BAA-846 / DSM 112012 / S4) (Agrobacterium vitis (strain S4)), this protein is Holliday junction branch migration complex subunit RuvA.